We begin with the raw amino-acid sequence, 163 residues long: NADH-quinone oxidoreductase subunit I (163 aa).

4Fe-4S ferredoxin-type domains are found at residues leucine 53–glycine 83 and valine 94–asparagine 123. Residues cysteine 63, cysteine 66, cysteine 69, cysteine 73, cysteine 103, cysteine 106, cysteine 109, and cysteine 113 each contribute to the [4Fe-4S] cluster site.

This sequence belongs to the complex I 23 kDa subunit family. NDH-1 is composed of 14 different subunits. Subunits NuoA, H, J, K, L, M, N constitute the membrane sector of the complex. The cofactor is [4Fe-4S] cluster.

The protein resides in the cell inner membrane. The catalysed reaction is a quinone + NADH + 5 H(+)(in) = a quinol + NAD(+) + 4 H(+)(out). Its function is as follows. NDH-1 shuttles electrons from NADH, via FMN and iron-sulfur (Fe-S) centers, to quinones in the respiratory chain. The immediate electron acceptor for the enzyme in this species is believed to be ubiquinone. Couples the redox reaction to proton translocation (for every two electrons transferred, four hydrogen ions are translocated across the cytoplasmic membrane), and thus conserves the redox energy in a proton gradient. This chain is NADH-quinone oxidoreductase subunit I, found in Bartonella henselae (strain ATCC 49882 / DSM 28221 / CCUG 30454 / Houston 1) (Rochalimaea henselae).